The sequence spans 485 residues: MGKFVEKLENAIRGYTFDDVLLIPQPTEVEPKDVDVSTQITPNVKLNIPILSAAMDTVTEWEMAVAMAREGGLGVIHRNMSIEEQVEQVKRVKRAERFIVEDVITIAPDETIDYALFLMEKHGIDGLPVVEEDRVVGIITKKDIAAREGRTVKELMTREVITVPESVDVEEALKIMMENRIDRLPVVNEDGKLVGLITMSDLVARKKYKNAVRNEKGELLVAAAVSPFDLRRAIELDRAGVDVIVVDTAHAHNLKAIKAMKEMRQKVSADFIVGNIANPKAVDDLTFADAVKVGIGPGSICTTRIVAGVGVPQITAIAMVADRAQEYGLYVIADGGIKYSGDIVKAIAAGADAVMLGNLLAGTKEAPGKEVIINGRKYKQYRGMGSLGAMMKGGAERYYQGGYMKTRKFVPEGVEGVVPYRGTVSEVLYQLVGGLKAGMGYVGARNIKELKEKGEFVIITSAGLRESHPHDIIITNEAPNYPLER.

CBS domains follow at residues 99–154 and 156–212; these read IVED…TVKE and MTRE…KNAV. NAD(+)-binding positions include Asp247 and 294–296; that span reads GIG. K(+)-binding residues include Gly296 and Gly298. Residue Ser299 participates in IMP binding. Cys301 is a binding site for K(+). Cys301 acts as the Thioimidate intermediate in catalysis. IMP contacts are provided by residues 334–336, 357–358, and 381–385; these read DGG, GN, and YRGMG. Arg397 acts as the Proton acceptor in catalysis. Glu412 provides a ligand contact to IMP. K(+) is bound by residues Glu466, Ser467, and His468.

This sequence belongs to the IMPDH/GMPR family. As to quaternary structure, homotetramer. Requires K(+) as cofactor.

The enzyme catalyses IMP + NAD(+) + H2O = XMP + NADH + H(+). It functions in the pathway purine metabolism; XMP biosynthesis via de novo pathway; XMP from IMP: step 1/1. With respect to regulation, mycophenolic acid (MPA) is a non-competitive inhibitor that prevents formation of the closed enzyme conformation by binding to the same site as the amobile flap. In contrast, mizoribine monophosphate (MZP) is a competitive inhibitor that induces the closed conformation. MPA is a potent inhibitor of mammalian IMPDHs but a poor inhibitor of the bacterial enzymes. MZP is a more potent inhibitor of bacterial IMPDH. Its function is as follows. Catalyzes the conversion of inosine 5'-phosphate (IMP) to xanthosine 5'-phosphate (XMP), the first committed and rate-limiting step in the de novo synthesis of guanine nucleotides, and therefore plays an important role in the regulation of cell growth. The chain is Inosine-5'-monophosphate dehydrogenase from Pyrococcus furiosus (strain ATCC 43587 / DSM 3638 / JCM 8422 / Vc1).